The chain runs to 310 residues: L-lactate dehydrogenase (310 aa).

NAD(+) contacts are provided by residues 10-11 (MV), D32, Y62, and 76-77 (GV). Residues Q79, R85, and 117 to 120 (NPVD) contribute to the substrate site. NAD(+)-binding positions include 115 to 117 (ATN) and S140. Residue 145–148 (DTAR) coordinates substrate. Residues R150 and 162 to 167 (QSVHAY) each bind beta-D-fructose 1,6-bisphosphate. H172 acts as the Proton acceptor in catalysis. Y218 carries the post-translational modification Phosphotyrosine. T227 is a substrate binding site.

The protein belongs to the LDH/MDH superfamily. LDH family. Homotetramer.

It is found in the cytoplasm. The enzyme catalyses (S)-lactate + NAD(+) = pyruvate + NADH + H(+). It participates in fermentation; pyruvate fermentation to lactate; (S)-lactate from pyruvate: step 1/1. Its activity is regulated as follows. Allosterically activated by fructose 1,6-bisphosphate (FBP). It binds two fructose 1,6-bisphosphate (FBP) molecules per tetramer. Functionally, catalyzes the conversion of lactate to pyruvate. The polypeptide is L-lactate dehydrogenase (Thermus caldophilus).